Reading from the N-terminus, the 68-residue chain is Large ribosomal subunit protein uL29 (68 aa).

Belongs to the universal ribosomal protein uL29 family.

This chain is Large ribosomal subunit protein uL29, found in Nitrobacter hamburgensis (strain DSM 10229 / NCIMB 13809 / X14).